Here is a 289-residue protein sequence, read N- to C-terminus: ATP synthase gamma chain (289 aa).

It belongs to the ATPase gamma chain family. As to quaternary structure, F-type ATPases have 2 components, CF(1) - the catalytic core - and CF(0) - the membrane proton channel. CF(1) has five subunits: alpha(3), beta(3), gamma(1), delta(1), epsilon(1). CF(0) has three main subunits: a, b and c.

It is found in the cell inner membrane. Produces ATP from ADP in the presence of a proton gradient across the membrane. The gamma chain is believed to be important in regulating ATPase activity and the flow of protons through the CF(0) complex. This chain is ATP synthase gamma chain, found in Azorhizobium caulinodans (strain ATCC 43989 / DSM 5975 / JCM 20966 / LMG 6465 / NBRC 14845 / NCIMB 13405 / ORS 571).